Here is a 104-residue protein sequence, read N- to C-terminus: Large ribosomal subunit protein uL24 (104 aa).

This sequence belongs to the universal ribosomal protein uL24 family. As to quaternary structure, part of the 50S ribosomal subunit.

In terms of biological role, one of two assembly initiator proteins, it binds directly to the 5'-end of the 23S rRNA, where it nucleates assembly of the 50S subunit. Its function is as follows. One of the proteins that surrounds the polypeptide exit tunnel on the outside of the subunit. In Erwinia tasmaniensis (strain DSM 17950 / CFBP 7177 / CIP 109463 / NCPPB 4357 / Et1/99), this protein is Large ribosomal subunit protein uL24.